A 515-amino-acid chain; its full sequence is Bifunctional dihydrofolate reductase-thymidylate synthase (515 aa).

In terms of domain architecture, DHFR spans alanine 26 to proline 228. Valine 30 contacts substrate. NADP(+) contacts are provided by residues alanine 32, glycine 38 to threonine 44, arginine 81 to threonine 83, and leucine 101 to arginine 104. Substrate is bound by residues isoleucine 154, tyrosine 160, and threonine 178. Glycine 155 to glutamate 162 is an NADP(+) binding site. Positions glutamate 233–valine 515 are thymidylate synthase. DUMP is bound at residue arginine 253. Cysteine 395 is an active-site residue. DUMP contacts are provided by residues histidine 396, glutamine 416 to aspartate 420, asparagine 428, and histidine 458 to tyrosine 460.

In the N-terminal section; belongs to the dihydrofolate reductase family. It in the C-terminal section; belongs to the thymidylate synthase family.

It catalyses the reaction (6S)-5,6,7,8-tetrahydrofolate + NADP(+) = 7,8-dihydrofolate + NADPH + H(+). The catalysed reaction is dUMP + (6R)-5,10-methylene-5,6,7,8-tetrahydrofolate = 7,8-dihydrofolate + dTMP. It functions in the pathway cofactor biosynthesis; tetrahydrofolate biosynthesis; 5,6,7,8-tetrahydrofolate from 7,8-dihydrofolate: step 1/1. Functionally, bifunctional enzyme. Involved in de novo dTMP biosynthesis. Key enzyme in folate metabolism. Catalyzes an essential reaction for de novo glycine and purine synthesis, DNA precursor synthesis, and for the conversion of dUMP to dTMP. In Crithidia fasciculata, this protein is Bifunctional dihydrofolate reductase-thymidylate synthase.